Here is a 209-residue protein sequence, read N- to C-terminus: MPDFSIENEISKSINKKNCIIVGVDEVGYGSLAGPVVSAASFFLRHDNEIIYNIKDSKKLTPKKRIEVYNTITSIVKWSIGFADVYEIDQHNILNATHLAMQRALNGLNCDIDYVIVDGNKVPDLPWNRKAIVDGDNISVSIAAASIIAKVTRDKLMETLHTQYPEYQWNKNKGYGTKHHLESLYKYGKTIHHRNTFAPLPGITKLYSK.

Positions 19–209 (CIIVGVDEVG…LPGITKLYSK (191 aa)) constitute an RNase H type-2 domain. D25, E26, and D118 together coordinate a divalent metal cation.

This sequence belongs to the RNase HII family. Mn(2+) is required as a cofactor. The cofactor is Mg(2+).

Its subcellular location is the cytoplasm. It carries out the reaction Endonucleolytic cleavage to 5'-phosphomonoester.. Functionally, endonuclease that specifically degrades the RNA of RNA-DNA hybrids. This Ehrlichia canis (strain Jake) protein is Ribonuclease HII.